Reading from the N-terminus, the 155-residue chain is uncharacterized protein (155 aa).

The N-acetyltransferase domain occupies 6–155 (LRIELGEETN…RDMVRLYLDL (150 aa)). Residues 69–71 (IAV), 77–82 (KKGFGK), and 111–117 (QLSLYQK) contribute to the CoA site.

Functionally, probable N-acetyltransferase. This is an uncharacterized protein from Bacillus subtilis (strain 168).